A 139-amino-acid polypeptide reads, in one-letter code: Peptide methionine sulfoxide reductase MsrB (139 aa).

The MsrB domain maps to 8–130 (DQEWRQQLTD…NSASLRFHSA (123 aa)). Zn(2+) is bound by residues Cys47, Cys50, Cys96, and Cys99. Cys119 serves as the catalytic Nucleophile.

It belongs to the MsrB Met sulfoxide reductase family. Zn(2+) is required as a cofactor.

It catalyses the reaction L-methionyl-[protein] + [thioredoxin]-disulfide + H2O = L-methionyl-(R)-S-oxide-[protein] + [thioredoxin]-dithiol. In Hahella chejuensis (strain KCTC 2396), this protein is Peptide methionine sulfoxide reductase MsrB.